We begin with the raw amino-acid sequence, 128 residues long: Protein ripply2 (128 aa).

Positions 1–64 are disordered; that stretch reads MDTTESAESA…ALPSGPGMAE (64 aa). The segment covering 17 to 28 has biased composition (low complexity); the sequence is PSRSRCPPSAQP. The WRPW motif motif lies at 34-37; it reads WRPW. The ripply homology domain stretch occupies residues 74–109; it reads HPVRLFWPKSKCYDYLYQEAETLLKNFPIQATISFY.

This sequence belongs to the ripply family. As to expression, expressed in the embryonic anterior presomitic mesoderm. First expressed in S-I at 8.5 dpc, where expression is maintained until 13.5 dpc, with an additional stripe of expression sometimes seen in the rostral part of S0 and S-I.

It localises to the nucleus. In terms of biological role, plays a role in somitogenesis. Required for somite segregation and establishment of rostrocaudal polarity in somites. The chain is Protein ripply2 from Mus musculus (Mouse).